A 410-amino-acid chain; its full sequence is Testis-specific protein TEX28 (410 aa).

The tract at residues Met1 to Leu43 is disordered. Polar residues predominate over residues Ser10–Arg23. Residues Ser24–Leu38 are compositionally biased toward low complexity. Residues Gln93 to Arg128 are a coiled coil. Residues Glu137–Pro164 are disordered. A coiled-coil region spans residues Gln185–Lys245. Residues Leu336–Ser358 traverse the membrane as a helical segment.

The protein belongs to the TEX28 family. As to expression, testis specific.

Its subcellular location is the membrane. The chain is Testis-specific protein TEX28 (TEX28) from Homo sapiens (Human).